The chain runs to 84 residues: UPF0410 protein YmgE (84 aa).

A run of 3 helical transmembrane segments spans residues 1–21, 27–47, and 58–78; these read MGII…KLIM, GGFF…GWLA, and GFNL…LGIF.

Belongs to the UPF0410 family.

Its subcellular location is the cell inner membrane. This chain is UPF0410 protein YmgE (ymgE), found in Escherichia coli (strain K12).